Consider the following 213-residue polypeptide: Probable nicotinate-nucleotide adenylyltransferase (213 aa).

A disordered region spans residues 194-213 (RKPNNGEAKDGDVKDEEAVR). A compositionally biased stretch (basic and acidic residues) spans 200-213 (EAKDGDVKDEEAVR).

This sequence belongs to the NadD family.

It carries out the reaction nicotinate beta-D-ribonucleotide + ATP + H(+) = deamido-NAD(+) + diphosphate. It functions in the pathway cofactor biosynthesis; NAD(+) biosynthesis; deamido-NAD(+) from nicotinate D-ribonucleotide: step 1/1. In terms of biological role, catalyzes the reversible adenylation of nicotinate mononucleotide (NaMN) to nicotinic acid adenine dinucleotide (NaAD). The polypeptide is Probable nicotinate-nucleotide adenylyltransferase (Mycolicibacterium smegmatis (strain ATCC 700084 / mc(2)155) (Mycobacterium smegmatis)).